The primary structure comprises 255 residues: Ribose-5-phosphate isomerase (255 aa).

Belongs to the ribose 5-phosphate isomerase family.

The protein resides in the cytoplasm. It catalyses the reaction aldehydo-D-ribose 5-phosphate = D-ribulose 5-phosphate. It functions in the pathway carbohydrate degradation; pentose phosphate pathway; D-ribose 5-phosphate from D-ribulose 5-phosphate (non-oxidative stage): step 1/1. This is Ribose-5-phosphate isomerase (RKI1) from Eremothecium gossypii (strain ATCC 10895 / CBS 109.51 / FGSC 9923 / NRRL Y-1056) (Yeast).